Here is a 1198-residue protein sequence, read N- to C-terminus: Fibronectin type-III domain-containing protein 3a (1198 aa).

Residues 189–201 (KLKDRHGTQKDKL) are compositionally biased toward basic and acidic residues. Residues 189 to 256 (KLKDRHGTQK…SQTDVEIEEK (68 aa)) are disordered. The span at 229–247 (GISTGSTKSKSVGKGKSNS) shows a compositional bias: low complexity. 9 Fibronectin type-III domains span residues 269 to 370 (NIAK…TMSC), 374 to 466 (APNL…TSGT), 470 to 563 (TPAS…TCPD), 567 to 661 (APSK…TPAV), 665 to 758 (PCQP…TAPG), 762 to 852 (QCKP…TPAS), 864 to 951 (SEDE…TKPL), 952 to 1045 (PPDP…TPKS), and 1046 to 1151 (VPAA…TEPP). Residues 553–574 (SETVDYTTCPDKPGAPSKPSVK) form a disordered region. The helical transmembrane segment at 1172-1192 (VCAAVILALFAIFSILIAVII) threads the bilayer.

The protein belongs to the FNDC3 family.

Its subcellular location is the golgi apparatus membrane. This is Fibronectin type-III domain-containing protein 3a (FNDC3A) from Gallus gallus (Chicken).